Reading from the N-terminus, the 254-residue chain is Thiazole synthase (254 aa).

Lys95 acts as the Schiff-base intermediate with DXP in catalysis. 1-deoxy-D-xylulose 5-phosphate is bound by residues Gly156, Ala182–Gly183, and Asn204–Thr205.

Belongs to the ThiG family. In terms of assembly, homotetramer. Forms heterodimers with either ThiH or ThiS.

The protein resides in the cytoplasm. The catalysed reaction is [ThiS sulfur-carrier protein]-C-terminal-Gly-aminoethanethioate + 2-iminoacetate + 1-deoxy-D-xylulose 5-phosphate = [ThiS sulfur-carrier protein]-C-terminal Gly-Gly + 2-[(2R,5Z)-2-carboxy-4-methylthiazol-5(2H)-ylidene]ethyl phosphate + 2 H2O + H(+). It functions in the pathway cofactor biosynthesis; thiamine diphosphate biosynthesis. Functionally, catalyzes the rearrangement of 1-deoxy-D-xylulose 5-phosphate (DXP) to produce the thiazole phosphate moiety of thiamine. Sulfur is provided by the thiocarboxylate moiety of the carrier protein ThiS. In vitro, sulfur can be provided by H(2)S. In Shewanella baltica (strain OS195), this protein is Thiazole synthase.